Consider the following 441-residue polypeptide: Trigger factor (441 aa).

One can recognise a PPIase FKBP-type domain in the interval 161 to 246 (GDQVTIDFVG…VSEVAEQILP (86 aa)).

This sequence belongs to the FKBP-type PPIase family. Tig subfamily.

The protein localises to the cytoplasm. It carries out the reaction [protein]-peptidylproline (omega=180) = [protein]-peptidylproline (omega=0). Functionally, involved in protein export. Acts as a chaperone by maintaining the newly synthesized protein in an open conformation. Functions as a peptidyl-prolyl cis-trans isomerase. The chain is Trigger factor from Marinomonas sp. (strain MWYL1).